Here is a 104-residue protein sequence, read N- to C-terminus: MAAKIKKGDKVVVLTGRDSGRSGEVIQVLPKEGRAFVRGINLVKKHQKQTQNQEGGIISKEAAIQLSNIAVADANGKPTRVGFRILEDGRKVRFAKTTGDQIDG.

This sequence belongs to the universal ribosomal protein uL24 family. As to quaternary structure, part of the 50S ribosomal subunit.

Functionally, one of two assembly initiator proteins, it binds directly to the 5'-end of the 23S rRNA, where it nucleates assembly of the 50S subunit. In terms of biological role, one of the proteins that surrounds the polypeptide exit tunnel on the outside of the subunit. This chain is Large ribosomal subunit protein uL24, found in Methylobacterium radiotolerans (strain ATCC 27329 / DSM 1819 / JCM 2831 / NBRC 15690 / NCIMB 10815 / 0-1).